A 352-amino-acid chain; its full sequence is MKQNVIALVFGGRSSEHSVALRSAATIHAALMALGHRVHCVGIDREGNWRYQGEPCQFPGAVDRSAPLISIRPGHRSLSYTTQESGTVEIGIDLLFPALHGRWGEDGTIQGLAAMCGLPCVGSGVLGSAMAMDKDVTKRMVQSAGLVVVPWLAMNSMRPWEELVECLGSSTLFVKPATSGSSIGVSRVSNALEYAAAFAIAAREDTKVLVEAAVCGREIECGVLELEEGLMASVVGEIIKKEGHAYYDYQAKYDSNSVTGLRVPSLLPPDIVARIQALSVQAFRCLELKGYARVDFFLTEEGEIILNEINTLPGFTSASMYPKMFECSGYPPPKLVGALVEYGLSSASKERL.

The region spanning 138–341 is the ATP-grasp domain; sequence KRMVQSAGLV…PPKLVGALVE (204 aa). ATP is bound at residue 165-220; that stretch reads ECLGSSTLFVKPATSGSSIGVSRVSNALEYAAAFAIAAREDTKVLVEAAVCGREIE. Asp295, Glu308, and Asn310 together coordinate Mg(2+).

It belongs to the D-alanine--D-alanine ligase family. The cofactor is Mg(2+). Requires Mn(2+) as cofactor.

The protein resides in the cytoplasm. It carries out the reaction 2 D-alanine + ATP = D-alanyl-D-alanine + ADP + phosphate + H(+). The protein operates within cell wall biogenesis; peptidoglycan biosynthesis. In terms of biological role, cell wall formation. The polypeptide is D-alanine--D-alanine ligase A (Pseudomonas putida (strain ATCC 47054 / DSM 6125 / CFBP 8728 / NCIMB 11950 / KT2440)).